A 275-amino-acid polypeptide reads, in one-letter code: Large ribosomal subunit protein uL2c (275 aa).

The disordered stretch occupies residues 219 to 267 (TVRGSVMNPCDHPHGGGEGRTPIGRTRPLTPWGKPALGKKTRKTKKLSS). Positions 255–264 (LGKKTRKTKK) are enriched in basic residues.

It belongs to the universal ribosomal protein uL2 family. Part of the 50S ribosomal subunit.

It is found in the plastid. The protein localises to the chloroplast. The chain is Large ribosomal subunit protein uL2c (rpl2) from Thalassiosira pseudonana (Marine diatom).